A 227-amino-acid chain; its full sequence is Thymidine kinase (227 aa).

Residues 15–22 (GSMFSGKT) and 87–90 (DEAQ) contribute to the ATP site. Residue Glu-88 is the Proton acceptor of the active site. Residues Cys-144, Cys-147, Cys-176, and Cys-179 each contribute to the Zn(2+) site. The segment at 198 to 227 (RAVATDDADASTNEADPEAADAASADGTAA) is disordered. Over residues 217 to 227 (ADAASADGTAA) the composition is skewed to low complexity.

It belongs to the thymidine kinase family. Homotetramer.

It localises to the cytoplasm. It carries out the reaction thymidine + ATP = dTMP + ADP + H(+). The protein is Thymidine kinase of Salinibacter ruber (strain DSM 13855 / M31).